The following is a 551-amino-acid chain: Hydroxymethylpyrimidine/phosphomethylpyrimidine kinase THI21 (551 aa).

Q64 is a 4-amino-5-hydroxymethyl-2-methylpyrimidine binding site.

In the N-terminal section; belongs to the ThiD family. The protein in the C-terminal section; belongs to the thiaminase-2 family.

It carries out the reaction 4-amino-5-hydroxymethyl-2-methylpyrimidine + ATP = 4-amino-2-methyl-5-(phosphooxymethyl)pyrimidine + ADP + H(+). The enzyme catalyses 4-amino-2-methyl-5-(phosphooxymethyl)pyrimidine + ATP = 4-amino-2-methyl-5-(diphosphooxymethyl)pyrimidine + ADP. It participates in cofactor biosynthesis; thiamine diphosphate biosynthesis; 4-amino-2-methyl-5-diphosphomethylpyrimidine from 5-amino-1-(5-phospho-D-ribosyl)imidazole: step 2/3. It functions in the pathway cofactor biosynthesis; thiamine diphosphate biosynthesis; 4-amino-2-methyl-5-diphosphomethylpyrimidine from 5-amino-1-(5-phospho-D-ribosyl)imidazole: step 3/3. Its function is as follows. Catalyzes the phosphorylation of hydroxymethylpyrimidine phosphate (HMP-P) to HMP-PP, and also probably that of HMP to HMP-P. This chain is Hydroxymethylpyrimidine/phosphomethylpyrimidine kinase THI21 (THI21), found in Saccharomyces cerevisiae (strain ATCC 204508 / S288c) (Baker's yeast).